Consider the following 538-residue polypeptide: UPF0761 membrane protein PsycPRwf_0630 (538 aa).

6 helical membrane-spanning segments follow: residues 43-63 (LLSIVPILTVLLMILSSVPAL), 100-120 (LTAIGALALFVTTIMTLTTIE), 143-163 (WTIITLGPLVLGTAFLVSSAV), 183-203 (WVQVVSFAVTIAGFIGMYWFI), 215-235 (IAGVFVAVTFELLKYSFGIIM), and 247-267 (AFAALPIFLLWIYLSWNLILL). The interval 427-538 (SVFSAQDADA…IITEDDNPNK (112 aa)) is disordered. Over residues 482 to 493 (PPDADIKAAAAK) the composition is skewed to low complexity. Positions 503-514 (KHTETAKQEHKK) are enriched in basic and acidic residues.

This sequence belongs to the UPF0761 family.

It localises to the cell inner membrane. This chain is UPF0761 membrane protein PsycPRwf_0630, found in Psychrobacter sp. (strain PRwf-1).